Reading from the N-terminus, the 471-residue chain is Sulfate adenylyltransferase subunit 1 (471 aa).

Residues 22–239 enclose the tr-type G domain; the sequence is KDMLRFLTCG…NIEIGEDDNL (218 aa). A G1 region spans residues 31–38; that stretch reads GSVDDGKS. 31–38 is a GTP binding site; that stretch reads GSVDDGKS. The tract at residues 89-93 is G2; sequence GITID. The G3 stretch occupies residues 110–113; it reads DTPG. GTP is bound by residues 110–114 and 165–168; these read DTPGH and NKMD. The tract at residues 165–168 is G4; that stretch reads NKMD. Residues 202–204 form a G5 region; it reads SAL.

The protein belongs to the TRAFAC class translation factor GTPase superfamily. Classic translation factor GTPase family. CysN/NodQ subfamily. Heterodimer composed of CysD, the smaller subunit, and CysN.

It carries out the reaction sulfate + ATP + H(+) = adenosine 5'-phosphosulfate + diphosphate. Its pathway is sulfur metabolism; hydrogen sulfide biosynthesis; sulfite from sulfate: step 1/3. With CysD forms the ATP sulfurylase (ATPS) that catalyzes the adenylation of sulfate producing adenosine 5'-phosphosulfate (APS) and diphosphate, the first enzymatic step in sulfur assimilation pathway. APS synthesis involves the formation of a high-energy phosphoric-sulfuric acid anhydride bond driven by GTP hydrolysis by CysN coupled to ATP hydrolysis by CysD. The sequence is that of Sulfate adenylyltransferase subunit 1 from Alteromonas mediterranea (strain DSM 17117 / CIP 110805 / LMG 28347 / Deep ecotype).